The primary structure comprises 145 residues: Putative antiporter subunit mnhG2 (145 aa).

A run of 3 helical transmembrane segments spans residues 11 to 31 (IAAVMLLLGSFIALISAIGIV), 51 to 71 (VLLTLIGVLIYFIVNTGFFSV), and 72 to 92 (RLLLSLVFINLTSPVGMHLVA).

The protein belongs to the CPA3 antiporters (TC 2.A.63) subunit G family. As to quaternary structure, may form a heterooligomeric complex that consists of seven subunits: mnhA2, mnhB2, mnhC2, mnhD2, mnhE2, mnhF2 and mnhG2.

It is found in the cell membrane. This Staphylococcus aureus (strain MRSA252) protein is Putative antiporter subunit mnhG2 (mnhG2).